A 343-amino-acid chain; its full sequence is Mating-type protein MAT-2 (343 aa).

Disordered stretches follow at residues 98–117 (RSPQ…SEQT) and 177–223 (KKPW…AAMT). Over residues 99 to 117 (SPQVVSSPQSAQTSPSEQT) the composition is skewed to low complexity. Residues 131–199 (APRPMNCWII…EHLRQHPNYK (69 aa)) constitute a DNA-binding region (HMG box). Positions 206-218 (GEKKKRQSRKSKR) are enriched in basic residues.

It localises to the nucleus. The polypeptide is Mating-type protein MAT-2 (MAT2) (Cochliobolus heterostrophus (Southern corn leaf blight fungus)).